A 126-amino-acid polypeptide reads, in one-letter code: Large ribosomal subunit protein bL12 (126 aa).

This sequence belongs to the bacterial ribosomal protein bL12 family. Homodimer. Part of the ribosomal stalk of the 50S ribosomal subunit. Forms a multimeric L10(L12)X complex, where L10 forms an elongated spine to which 2 to 4 L12 dimers bind in a sequential fashion. Binds GTP-bound translation factors.

Its function is as follows. Forms part of the ribosomal stalk which helps the ribosome interact with GTP-bound translation factors. Is thus essential for accurate translation. The protein is Large ribosomal subunit protein bL12 of Rhizobium meliloti (strain 1021) (Ensifer meliloti).